We begin with the raw amino-acid sequence, 319 residues long: 2-dehydropantoate 2-reductase (319 aa).

Residues 10–15 (GTGALG) and asparagine 105 contribute to the NADP(+) site. Asparagine 105 serves as a coordination point for substrate. Residue lysine 192 is the Proton donor of the active site. Residues asparagine 196, asparagine 200, and serine 262 each contribute to the substrate site. Position 274 (glutamate 274) interacts with NADP(+).

The protein belongs to the ketopantoate reductase family.

It is found in the cytoplasm. It carries out the reaction (R)-pantoate + NADP(+) = 2-dehydropantoate + NADPH + H(+). It participates in cofactor biosynthesis; (R)-pantothenate biosynthesis; (R)-pantoate from 3-methyl-2-oxobutanoate: step 2/2. Functionally, catalyzes the NADPH-dependent reduction of ketopantoate into pantoic acid. The polypeptide is 2-dehydropantoate 2-reductase (Nostoc sp. (strain PCC 7120 / SAG 25.82 / UTEX 2576)).